The sequence spans 201 residues: Holliday junction resolvase RecU (201 aa).

Residues threonine 85, aspartate 87, glutamate 100, and glutamine 119 each contribute to the Mg(2+) site.

Belongs to the RecU family. The cofactor is Mg(2+).

Its subcellular location is the cytoplasm. It catalyses the reaction Endonucleolytic cleavage at a junction such as a reciprocal single-stranded crossover between two homologous DNA duplexes (Holliday junction).. In terms of biological role, endonuclease that resolves Holliday junction intermediates in genetic recombination. Cleaves mobile four-strand junctions by introducing symmetrical nicks in paired strands. Promotes annealing of linear ssDNA with homologous dsDNA. Required for DNA repair, homologous recombination and chromosome segregation. The sequence is that of Holliday junction resolvase RecU from Geobacillus sp. (strain WCH70).